The following is an 88-amino-acid chain: Small ribosomal subunit protein uS17 (88 aa).

It belongs to the universal ribosomal protein uS17 family. As to quaternary structure, part of the 30S ribosomal subunit.

Its function is as follows. One of the primary rRNA binding proteins, it binds specifically to the 5'-end of 16S ribosomal RNA. The sequence is that of Small ribosomal subunit protein uS17 from Synechococcus sp. (strain CC9311).